We begin with the raw amino-acid sequence, 93 residues long: Translation initiation factor IF-1 (93 aa).

In terms of domain architecture, S1-like spans 1 to 72 (MAKEELIQFE…EKGRLIFRHK (72 aa)). Residues 70–93 (RHKDERPGGGPPRGAPPRGQFRRR) are disordered.

The protein belongs to the IF-1 family. Component of the 30S ribosomal translation pre-initiation complex which assembles on the 30S ribosome in the order IF-2 and IF-3, IF-1 and N-formylmethionyl-tRNA(fMet); mRNA recruitment can occur at any time during PIC assembly.

It is found in the cytoplasm. Functionally, one of the essential components for the initiation of protein synthesis. Stabilizes the binding of IF-2 and IF-3 on the 30S subunit to which N-formylmethionyl-tRNA(fMet) subsequently binds. Helps modulate mRNA selection, yielding the 30S pre-initiation complex (PIC). Upon addition of the 50S ribosomal subunit IF-1, IF-2 and IF-3 are released leaving the mature 70S translation initiation complex. The protein is Translation initiation factor IF-1 of Rhodopseudomonas palustris (strain BisB18).